The sequence spans 150 residues: Large ribosomal subunit protein bL9 (150 aa).

It belongs to the bacterial ribosomal protein bL9 family.

Its function is as follows. Binds to the 23S rRNA. This chain is Large ribosomal subunit protein bL9, found in Cupriavidus taiwanensis (strain DSM 17343 / BCRC 17206 / CCUG 44338 / CIP 107171 / LMG 19424 / R1) (Ralstonia taiwanensis (strain LMG 19424)).